The primary structure comprises 250 residues: 5'-nucleotidase SurE (250 aa).

A divalent metal cation is bound by residues Asp-8, Asp-9, Ser-40, and Asn-94.

It belongs to the SurE nucleotidase family. Requires a divalent metal cation as cofactor.

It localises to the cytoplasm. The enzyme catalyses a ribonucleoside 5'-phosphate + H2O = a ribonucleoside + phosphate. Functionally, nucleotidase that shows phosphatase activity on nucleoside 5'-monophosphates. The polypeptide is 5'-nucleotidase SurE (Wolbachia pipientis wMel).